A 360-amino-acid chain; its full sequence is Alpha-ketoglutarate dependent kainoid synthase (360 aa).

A Fe2OG dioxygenase domain is found at 200-310 (MFFSNRIYPE…RASLISFYEP (111 aa)). Positions 225, 227, and 286 each coordinate Fe cation. 2-oxoglutarate is bound at residue R301.

Belongs to the iron/ascorbate-dependent oxidoreductase family. Fe(2+) serves as cofactor.

The enzyme catalyses prekainate + 2-oxoglutarate + O2 = kainate + succinate + CO2 + H2O. It carries out the reaction prekainate + 2-oxoglutarate + O2 + H(+) = kainate lactone + succinate + CO2 + H2O. It functions in the pathway secondary metabolite biosynthesis. Its activity is regulated as follows. Inhibited by the iron chelator EDTA. In terms of biological role, iron/ascorbate-dependent oxidoreductase: part of the gene cluster that mediates the biosynthesis of kainic acid (KA) and derivatives, natural products with neurochemical activity acting as ionotropic glutamate receptor (iGluR) agonists, thus being neurotoxins. Catalyzes the conversion of prekainic acid to kainic acid and kainic acid lactone. The chain is Alpha-ketoglutarate dependent kainoid synthase from Digenea simplex (Marine red alga).